We begin with the raw amino-acid sequence, 387 residues long: Alanine racemase (387 aa).

The Proton acceptor; specific for D-alanine role is filled by lysine 38. Lysine 38 bears the N6-(pyridoxal phosphate)lysine mark. Residue arginine 136 coordinates substrate. Residue tyrosine 267 is the Proton acceptor; specific for L-alanine of the active site. Residue methionine 316 coordinates substrate.

This sequence belongs to the alanine racemase family. The cofactor is pyridoxal 5'-phosphate.

It catalyses the reaction L-alanine = D-alanine. It functions in the pathway amino-acid biosynthesis; D-alanine biosynthesis; D-alanine from L-alanine: step 1/1. Its function is as follows. Catalyzes the interconversion of L-alanine and D-alanine. May also act on other amino acids. In Clostridium tetani (strain Massachusetts / E88), this protein is Alanine racemase (alr).